The primary structure comprises 208 residues: Outer-membrane lipoprotein carrier protein (208 aa).

Positions 1 to 21 (MRLIRTLFVAALAMGTSLAHA) are cleaved as a signal peptide.

The protein belongs to the LolA family. In terms of assembly, monomer.

The protein localises to the periplasm. Its function is as follows. Participates in the translocation of lipoproteins from the inner membrane to the outer membrane. Only forms a complex with a lipoprotein if the residue after the N-terminal Cys is not an aspartate (The Asp acts as a targeting signal to indicate that the lipoprotein should stay in the inner membrane). The protein is Outer-membrane lipoprotein carrier protein of Pseudomonas paraeruginosa (strain DSM 24068 / PA7) (Pseudomonas aeruginosa (strain PA7)).